Consider the following 312-residue polypeptide: Olfactory receptor 13J1 (312 aa).

At 1 to 25 (MEPLNRTEVSEFFLKGFSGYPALEH) the chain is on the extracellular side. Asn-5 carries an N-linked (GlcNAc...) asparagine glycan. The helical transmembrane segment at 26–46 (LLFPLCSAMYLVTLLGNTAIM) threads the bilayer. Topologically, residues 47–54 (AVSVLDIH) are cytoplasmic. A helical transmembrane segment spans residues 55-75 (LHTPVYFFLGNLSTLDICYTP). The Extracellular segment spans residues 76–99 (TFVPLMLVHLLSSRKTISFAVCAI). Cysteines 97 and 189 form a disulfide. The chain crosses the membrane as a helical span at residues 100–120 (QMCLSLSTGSTECLLLAITAY). At 121-139 (DRYLAICQPLRYHVLMSHR) the chain is on the cytoplasmic side. A helical transmembrane segment spans residues 140 to 160 (LCVLLMGAAWVLCLLKSVTEM). Residues 161–197 (VISMRLPFCGHHVVSHFTCKILAVLKLACGNTSVSED) are Extracellular-facing. Residue Asn-191 is glycosylated (N-linked (GlcNAc...) asparagine). Residues 198-217 (FLLAGSILLLPVPLAFICLS) form a helical membrane-spanning segment. Topologically, residues 218–237 (YLLILATILRVPSAARCCKA) are cytoplasmic. Residues 238 to 258 (FSTCLAHLAVVLLFYGTIIFM) form a helical membrane-spanning segment. Residues 259–271 (YLKPKSKEAHISD) are Extracellular-facing. A helical transmembrane segment spans residues 272-292 (EVFTVLYAMVTTMLNPTIYSL). Residues 293–312 (RNKEVKEAARKVWGRSRASR) lie on the Cytoplasmic side of the membrane.

It belongs to the G-protein coupled receptor 1 family.

It localises to the cell membrane. In terms of biological role, odorant receptor. This chain is Olfactory receptor 13J1 (OR13J1), found in Homo sapiens (Human).